The primary structure comprises 182 residues: ATP-dependent protease subunit HslV (182 aa).

Threonine 7 is a catalytic residue. Residues alanine 166, cysteine 169, and threonine 172 each contribute to the Na(+) site.

It belongs to the peptidase T1B family. HslV subfamily. In terms of assembly, a double ring-shaped homohexamer of HslV is capped on each side by a ring-shaped HslU homohexamer. The assembly of the HslU/HslV complex is dependent on binding of ATP.

Its subcellular location is the cytoplasm. The catalysed reaction is ATP-dependent cleavage of peptide bonds with broad specificity.. Its activity is regulated as follows. Allosterically activated by HslU binding. Protease subunit of a proteasome-like degradation complex believed to be a general protein degrading machinery. The chain is ATP-dependent protease subunit HslV from Albidiferax ferrireducens (strain ATCC BAA-621 / DSM 15236 / T118) (Rhodoferax ferrireducens).